The chain runs to 329 residues: Peroxidase 56 (329 aa).

Positions M1 to G31 are cleaved as a signal peptide. Cystine bridges form between C41-C119, C74-C79, C125-C325, and C204-C236. Catalysis depends on H72, which acts as the Proton acceptor. The Ca(2+) site is built by D73, V76, G78, E80, and S82. A glycan (N-linked (GlcNAc...) asparagine) is linked at N158. Residue P167 coordinates substrate. A glycan (N-linked (GlcNAc...) asparagine) is linked at N172. Residue H197 coordinates heme b. T198 lines the Ca(2+) pocket. N213 carries N-linked (GlcNAc...) asparagine glycosylation. The Ca(2+) site is built by D248, S251, and D256.

It belongs to the peroxidase family. Classical plant (class III) peroxidase subfamily. It depends on heme b as a cofactor. Ca(2+) serves as cofactor.

The protein resides in the secreted. It catalyses the reaction 2 a phenolic donor + H2O2 = 2 a phenolic radical donor + 2 H2O. In terms of biological role, removal of H(2)O(2), oxidation of toxic reductants, biosynthesis and degradation of lignin, suberization, auxin catabolism, response to environmental stresses such as wounding, pathogen attack and oxidative stress. These functions might be dependent on each isozyme/isoform in each plant tissue. This chain is Peroxidase 56 (PER56), found in Arabidopsis thaliana (Mouse-ear cress).